The chain runs to 93 residues: Integration host factor subunit beta (93 aa).

The protein belongs to the bacterial histone-like protein family. In terms of assembly, heterodimer of an alpha and a beta chain.

Functionally, this protein is one of the two subunits of integration host factor, a specific DNA-binding protein that functions in genetic recombination as well as in transcriptional and translational control. The chain is Integration host factor subunit beta from Idiomarina loihiensis (strain ATCC BAA-735 / DSM 15497 / L2-TR).